The following is a 669-amino-acid chain: UvrABC system protein B (669 aa).

The Helicase ATP-binding domain maps to 26 to 414 (TNFHAGIAKQ…AGEVIELLVR (389 aa)). 39-46 (GVTGSGKT) serves as a coordination point for ATP. The Beta-hairpin motif lies at 92 to 115 (YYDYYQPEAYVPASDTFIEKDSSI). A Helicase C-terminal domain is found at 435–597 (LISQINVCIK…SVVRPISDIL (163 aa)). Residues 631–666 (AAQMKVLEQQMYQHARDLEFEDAARIRDQIQRLREA) enclose the UVR domain.

The protein belongs to the UvrB family. In terms of assembly, forms a heterotetramer with UvrA during the search for lesions. Interacts with UvrC in an incision complex.

It is found in the cytoplasm. Functionally, the UvrABC repair system catalyzes the recognition and processing of DNA lesions. A damage recognition complex composed of 2 UvrA and 2 UvrB subunits scans DNA for abnormalities. Upon binding of the UvrA(2)B(2) complex to a putative damaged site, the DNA wraps around one UvrB monomer. DNA wrap is dependent on ATP binding by UvrB and probably causes local melting of the DNA helix, facilitating insertion of UvrB beta-hairpin between the DNA strands. Then UvrB probes one DNA strand for the presence of a lesion. If a lesion is found the UvrA subunits dissociate and the UvrB-DNA preincision complex is formed. This complex is subsequently bound by UvrC and the second UvrB is released. If no lesion is found, the DNA wraps around the other UvrB subunit that will check the other stand for damage. The protein is UvrABC system protein B of Xylella fastidiosa (strain 9a5c).